Reading from the N-terminus, the 616-residue chain is Chaperone protein HscA (616 aa).

The protein belongs to the heat shock protein 70 family.

Its function is as follows. Chaperone involved in the maturation of iron-sulfur cluster-containing proteins. Has a low intrinsic ATPase activity which is markedly stimulated by HscB. Involved in the maturation of IscU. The sequence is that of Chaperone protein HscA from Salmonella paratyphi A (strain ATCC 9150 / SARB42).